Reading from the N-terminus, the 189-residue chain is Elongation factor P (189 aa).

This sequence belongs to the elongation factor P family.

The protein resides in the cytoplasm. Its pathway is protein biosynthesis; polypeptide chain elongation. Functionally, involved in peptide bond synthesis. Stimulates efficient translation and peptide-bond synthesis on native or reconstituted 70S ribosomes in vitro. Probably functions indirectly by altering the affinity of the ribosome for aminoacyl-tRNA, thus increasing their reactivity as acceptors for peptidyl transferase. The polypeptide is Elongation factor P (Campylobacter jejuni subsp. doylei (strain ATCC BAA-1458 / RM4099 / 269.97)).